A 516-amino-acid chain; its full sequence is Potassium voltage-gated channel subfamily A member 10 (516 aa).

A helical transmembrane segment spans residues 223–244 (VALVSVLVIVISIIIFCMETLP). An N-linked (GlcNAc...) asparagine glycan is attached at Asn-261. A helical transmembrane segment spans residues 276-296 (FFVIETACIIWFSFELFVRFI). A helical transmembrane segment spans residues 308–328 (IMNIIDIVSIIPYFVTLTTEL). Residue Asn-339 is glycosylated (N-linked (GlcNAc...) asparagine). The chain crosses the membrane as a helical; Voltage-sensor span at residues 344–363 (ILRIIRLVRVFRIFKLSRHS). Residues 380 to 400 (LGLLIFFLFIGVILFSSAVYF) traverse the membrane as a helical segment. Residues 426–431 (TVGYGD) carry the Selectivity filter motif. A helical membrane pass occupies residues 441–461 (IVGTLCAIAGVLTIALPVPVI). The N-linked (GlcNAc...) asparagine glycan is linked to Asn-503.

It belongs to the potassium channel family. A (Shaker) (TC 1.A.1.2) subfamily. Kv1.8/KCNA10 sub-subfamily. As to quaternary structure, homotetramer. In terms of tissue distribution, detected in brain, cochlear sensory epithelium, cochlear ganglion, tegumentum vasculosum. Detected at low levels in cochlear lagena.

Its subcellular location is the membrane. It carries out the reaction K(+)(in) = K(+)(out). With respect to regulation, the channel activity is up-regulated by cAMP. Voltage-gated potassium ion channel that mediates K(+) permeability of excitable membranes. When opened in response to the voltage difference across the membrane, KCNA10 channel selectively allows the flow of potassium ions across the membrane down their electrochemical gradient. This is Potassium voltage-gated channel subfamily A member 10 (KCNA10) from Gallus gallus (Chicken).